Here is a 464-residue protein sequence, read N- to C-terminus: Adenosylhomocysteinase (464 aa).

Substrate is bound by residues Thr56, Asp131, and Glu190. 191-193 (TTT) is an NAD(+) binding site. Residues Lys220 and Asp224 each coordinate substrate. NAD(+) is bound by residues Asn225, 254–259 (GFGDVG), Glu277, Asn312, 333–335 (IGH), and Asn378.

This sequence belongs to the adenosylhomocysteinase family. Requires NAD(+) as cofactor.

Its subcellular location is the cytoplasm. The catalysed reaction is S-adenosyl-L-homocysteine + H2O = L-homocysteine + adenosine. Its pathway is amino-acid biosynthesis; L-homocysteine biosynthesis; L-homocysteine from S-adenosyl-L-homocysteine: step 1/1. May play a key role in the regulation of the intracellular concentration of adenosylhomocysteine. In Zymomonas mobilis subsp. mobilis (strain ATCC 31821 / ZM4 / CP4), this protein is Adenosylhomocysteinase.